A 397-amino-acid polypeptide reads, in one-letter code: MAANLLEQLRGMTVVVADTGGIQSIATFTPRDATTNPSLITAAAQMPQYQSIIDDTLRQVRTELGAEAPVEAIVAEAIDELFVAFGLRILEIVPGRVSTEVDARLSYDTEATIAKARKLIGLYERAGIRRDRVLIKIASTWEGIRAAEVLEKEGIHCNLTLLFGFHQAVACAEAGVTLISPFVGRILDWYKKESGRDAFPGAEDPGVQSVTQIYNYYKKFGYATEVMGASFRNISEIIELAGCDLLTISPGLLEELRQTEALLERKLDPAIAESLELEQIHLDRDRFAELHQADRMANEKLDEGIRGFCKAIDTLEGLLKQRLAVLEGKAVFHHAAHEVFSVCDLDGDGFITREEWLGSDAVFDALDLNKDGKLNEEDLLAGLGATLQMAGRAVATV.

Lys-136 (schiff-base intermediate with substrate) is an active-site residue.

It belongs to the transaldolase family. Type 1 subfamily. As to quaternary structure, homodimer.

It localises to the cytoplasm. It catalyses the reaction D-sedoheptulose 7-phosphate + D-glyceraldehyde 3-phosphate = D-erythrose 4-phosphate + beta-D-fructose 6-phosphate. Its pathway is carbohydrate degradation; pentose phosphate pathway; D-glyceraldehyde 3-phosphate and beta-D-fructose 6-phosphate from D-ribose 5-phosphate and D-xylulose 5-phosphate (non-oxidative stage): step 2/3. In terms of biological role, transaldolase is important for the balance of metabolites in the pentose-phosphate pathway. The chain is Transaldolase from Synechococcus sp. (strain ATCC 27144 / PCC 6301 / SAUG 1402/1) (Anacystis nidulans).